Reading from the N-terminus, the 518-residue chain is Arp2/3 complex-activating protein rickA (518 aa).

Positions 310–518 (SAAQLQSAET…ERNAKQSQQR (209 aa)) are disordered. Composition is skewed to pro residues over residues 344–354 (TPPPAPPPPMP) and 382–401 (VPPP…PPPV). Over residues 418-430 (QPRPAVDTTNLMK) the composition is skewed to polar residues. Residues 424–441 (DTTNLMKQIQGGFNLKKI) enclose the WH2 domain. The span at 439 to 461 (KKIEYGEDGKPIPKNKEDTKETS) shows a compositional bias: basic and acidic residues. Residues 488 to 498 (GTDSGWASDVS) show a composition bias toward polar residues.

Homodimer.

Its subcellular location is the cell surface. Its function is as follows. Recruits and activates the Arp2/3 complex, which in turn leads to actin polymerization, promoting Rickettsia motility during infection. This chain is Arp2/3 complex-activating protein rickA (rickA), found in Rickettsia bellii (strain RML369-C).